We begin with the raw amino-acid sequence, 117 residues long: uncharacterized protein (117 aa).

It is found in the cytoplasm. It localises to the nucleus. This is an uncharacterized protein from Schizosaccharomyces pombe (strain 972 / ATCC 24843) (Fission yeast).